The sequence spans 382 residues: D-galactonate dehydratase (382 aa).

D183 contributes to the Mg(2+) binding site. The active-site Proton donor is the H185. Mg(2+) contacts are provided by E209 and E235. Residue H285 is the Proton acceptor of the active site.

Belongs to the mandelate racemase/muconate lactonizing enzyme family. GalD subfamily. Mg(2+) serves as cofactor.

The enzyme catalyses D-galactonate = 2-dehydro-3-deoxy-D-galactonate + H2O. It participates in carbohydrate acid metabolism; D-galactonate degradation; D-glyceraldehyde 3-phosphate and pyruvate from D-galactonate: step 1/3. Functionally, catalyzes the dehydration of D-galactonate to 2-keto-3-deoxy-D-galactonate. The sequence is that of D-galactonate dehydratase from Salmonella paratyphi A (strain AKU_12601).